The following is a 544-amino-acid chain: Probable protein kinase UbiB (544 aa).

Residues 123–501 (EFDIKPLASA…KRQQATGKFL (379 aa)) form the Protein kinase domain. ATP-binding positions include 129 to 137 (LASASIAQV) and K152. The active-site Proton acceptor is D287. 2 helical membrane-spanning segments follow: residues 496-516 (ATGKFLFGVGATLVVCSAILV) and 519-539 (AYEQLSMASGIAGVTFWLLSW).

Belongs to the ABC1 family. UbiB subfamily.

The protein localises to the cell inner membrane. Its pathway is cofactor biosynthesis; ubiquinone biosynthesis [regulation]. Is probably a protein kinase regulator of UbiI activity which is involved in aerobic coenzyme Q (ubiquinone) biosynthesis. This chain is Probable protein kinase UbiB, found in Vibrio parahaemolyticus serotype O3:K6 (strain RIMD 2210633).